Here is a 283-residue protein sequence, read N- to C-terminus: Diaminopimelate epimerase (283 aa).

Substrate-binding residues include Asn-13, Gln-45, and Asn-65. The active-site Proton donor is the Cys-74. Substrate is bound by residues 75–76, Asn-156, Asn-190, and 208–209; these read GN and ER. Residue Cys-217 is the Proton acceptor of the active site. Position 218 to 219 (218 to 219) interacts with substrate; the sequence is GS.

This sequence belongs to the diaminopimelate epimerase family. In terms of assembly, homodimer.

Its subcellular location is the cytoplasm. The catalysed reaction is (2S,6S)-2,6-diaminopimelate = meso-2,6-diaminopimelate. Its pathway is amino-acid biosynthesis; L-lysine biosynthesis via DAP pathway; DL-2,6-diaminopimelate from LL-2,6-diaminopimelate: step 1/1. In terms of biological role, catalyzes the stereoinversion of LL-2,6-diaminopimelate (L,L-DAP) to meso-diaminopimelate (meso-DAP), a precursor of L-lysine and an essential component of the bacterial peptidoglycan. The protein is Diaminopimelate epimerase of Bartonella quintana (strain Toulouse) (Rochalimaea quintana).